Reading from the N-terminus, the 478-residue chain is 2,5-dioxopentanoate dehydrogenase (478 aa).

Residues 148 to 149 (WN), 172 to 175 (KPAT), and 225 to 226 (GS) contribute to the NADP(+) site. The active-site Proton acceptor is glutamate 249. The Nucleophile role is filled by cysteine 283. Glutamate 379 lines the NADP(+) pocket.

The protein belongs to the aldehyde dehydrogenase family. Homotetramer.

It catalyses the reaction 2,5-dioxopentanoate + NADP(+) + H2O = 2-oxoglutarate + NADPH + 2 H(+). Functionally, 2,5-dioxopentanoate dehydrogenase involved in the degradation of pentoses such as D-arabinose or D-xylose, a major component of hemicelluloses such as xylan. Catalyzes the fifth reaction in the pentose utilization pathway through dehydratation of 2,5-dioxopentanoate into 2-oxoglutarate. Also shows dehydrogenase activity toward glycolaldehyde and DL-glyceraldehyde. The sequence is that of 2,5-dioxopentanoate dehydrogenase from Saccharolobus solfataricus (strain ATCC 35092 / DSM 1617 / JCM 11322 / P2) (Sulfolobus solfataricus).